A 216-amino-acid polypeptide reads, in one-letter code: Large ribosomal subunit protein bL25 (216 aa).

Positions 191 to 216 (LVSAESEEDEDAPAADEVPATEVSEE) are disordered. Residues 195–204 (ESEEDEDAPA) show a composition bias toward acidic residues.

Belongs to the bacterial ribosomal protein bL25 family. CTC subfamily. In terms of assembly, part of the 50S ribosomal subunit; part of the 5S rRNA/L5/L18/L25 subcomplex. Contacts the 5S rRNA. Binds to the 5S rRNA independently of L5 and L18.

This is one of the proteins that binds to the 5S RNA in the ribosome where it forms part of the central protuberance. In Jannaschia sp. (strain CCS1), this protein is Large ribosomal subunit protein bL25.